The following is a 306-amino-acid chain: Beta-lactamase (306 aa).

Residues 1–34 (MNVKRKATLKFGICIGLLCVSFTGFNSLFGSTHA) form the signal peptide. Serine 89 acts as the Acyl-ester intermediate in catalysis. Residue 251–253 (KSG) coordinates substrate.

The protein belongs to the class-A beta-lactamase family.

It catalyses the reaction a beta-lactam + H2O = a substituted beta-amino acid. Its function is as follows. This protein is a beta-lactamase with a substrate specificity for penicillins. This Bacillus amyloliquefaciens (Bacillus velezensis) protein is Beta-lactamase (penP).